A 416-amino-acid polypeptide reads, in one-letter code: Serine/threonine transporter SstT (416 aa).

9 consecutive transmembrane segments (helical) span residues 14 to 34 (GSIV…ALLS), 43 to 63 (FLGT…VFVL), 82 to 102 (VLVL…VASF), 141 to 161 (ALAT…GVAL), 192 to 212 (IGVF…ALMG), 220 to 240 (LLGS…FLAI), 298 to 318 (MAGA…TLGV), 339 to 359 (ASGV…LFGI), and 363 to 383 (VAMQ…SAET).

Belongs to the dicarboxylate/amino acid:cation symporter (DAACS) (TC 2.A.23) family.

The protein resides in the cell inner membrane. It catalyses the reaction L-serine(in) + Na(+)(in) = L-serine(out) + Na(+)(out). It carries out the reaction L-threonine(in) + Na(+)(in) = L-threonine(out) + Na(+)(out). Its function is as follows. Involved in the import of serine and threonine into the cell, with the concomitant import of sodium (symport system). This Laribacter hongkongensis (strain HLHK9) protein is Serine/threonine transporter SstT.